Consider the following 249-residue polypeptide: DNA repair protein RecO (249 aa).

This sequence belongs to the RecO family.

Involved in DNA repair and RecF pathway recombination. This chain is DNA repair protein RecO, found in Rhodopseudomonas palustris (strain BisB5).